The chain runs to 818 residues: Actin filament-associated protein 1-like 2 (818 aa).

A Phosphotyrosine modification is found at tyrosine 56. Residues 66–163 (QNAESQGKAP…SKGKSAPYQW (98 aa)) are disordered. Polar residues predominate over residues 85 to 94 (EPSQHSSAPQ). The span at 123–139 (YYEEAEPYDTSLNEDGE) shows a compositional bias: acidic residues. PH domains lie at 175–271 (DARI…EVSG) and 353–447 (SLET…SESG). Serine 408 carries the phosphoserine modification. A Phosphotyrosine modification is found at tyrosine 413. Phosphoserine is present on serine 484. Residues 513-532 (AAVEPTEEATPVADDPNERE) are disordered. A coiled-coil region spans residues 652–749 (AEIKLGKNRT…VKDNLKKAEA (98 aa)). A disordered region spans residues 765–787 (NVSPRPKAVTPASAPDCTPVNSA).

In terms of assembly, interacts with SRC. Interacts with LCK when tyrosine phosphorylated. Post-translationally, tyrosine phosphorylated (by SRC). As to expression, detected in spleen and thyroid, and at lower levels in kidney, brain, lung and pancreas.

It localises to the cytoplasm. In terms of biological role, may play a role in a signaling cascade by enhancing the kinase activity of SRC. Contributes to SRC-regulated transcription activation. The polypeptide is Actin filament-associated protein 1-like 2 (AFAP1L2) (Homo sapiens (Human)).